Consider the following 83-residue polypeptide: Small ribosomal subunit protein eS21 (83 aa).

The protein belongs to the eukaryotic ribosomal protein eS21 family. As to quaternary structure, component of the 40S small ribosomal subunit. Interacts with sta.

The protein localises to the cytoplasm. It localises to the cytosol. It is found in the rough endoplasmic reticulum. May be an associated component of the ribosome rather than a core structural subunit. May act as a translation initiation factor. Has a role in regulation of cell proliferation in the hematopoietic organs and the imaginal disks of larva. The polypeptide is Small ribosomal subunit protein eS21 (RpS21) (Drosophila grimshawi (Hawaiian fruit fly)).